The chain runs to 321 residues: Methenyltetrahydromethanopterin cyclohydrolase (321 aa).

Belongs to the MCH family.

Its subcellular location is the cytoplasm. The catalysed reaction is 5,10-methenyl-5,6,7,8-tetrahydromethanopterin + H2O = N(5)-formyl-5,6,7,8-tetrahydromethanopterin + H(+). It participates in one-carbon metabolism; methanogenesis from CO(2); 5,10-methenyl-5,6,7,8-tetrahydromethanopterin from CO(2): step 3/3. Its function is as follows. Catalyzes the reversible interconversion of 5-formyl-H(4)MPT to methenyl-H(4)MPT(+). This Methanosarcina mazei (strain ATCC BAA-159 / DSM 3647 / Goe1 / Go1 / JCM 11833 / OCM 88) (Methanosarcina frisia) protein is Methenyltetrahydromethanopterin cyclohydrolase.